Consider the following 203-residue polypeptide: Endo-type membrane-bound lytic murein transglycosylase A (203 aa).

Positions 1-15 (MKLRWFAFLIVLLAG) are cleaved as a signal peptide. Cys16 carries N-palmitoyl cysteine lipidation. The S-diacylglycerol cysteine moiety is linked to residue Cys16.

Belongs to the transglycosylase Slt family.

It is found in the cell outer membrane. It catalyses the reaction Endolytic cleavage of the (1-&gt;4)-beta-glycosidic linkage between N-acetylmuramic acid (MurNAc) and N-acetylglucosamine (GlcNAc) residues in peptidoglycan with concomitant formation of a 1,6-anhydrobond in the MurNAc residue.. Its function is as follows. Murein-degrading enzyme. May play a role in recycling of muropeptides during cell elongation and/or cell division. Preferentially cleaves at a distance of more than two disaccharide units from the ends of the glycan chain. The polypeptide is Endo-type membrane-bound lytic murein transglycosylase A (Shigella dysenteriae serotype 1 (strain Sd197)).